We begin with the raw amino-acid sequence, 255 residues long: Pimeloyl-[acyl-carrier protein] methyl ester esterase (255 aa).

Residues Trp18, 78 to 79 (SL), and 139 to 143 (FLALD) contribute to the substrate site. Ser78 serves as the catalytic Nucleophile. Catalysis depends on residues Asp203 and His233. Residue His233 participates in substrate binding.

Belongs to the AB hydrolase superfamily. Carboxylesterase BioH family. Monomer.

It is found in the cytoplasm. The catalysed reaction is 6-carboxyhexanoyl-[ACP] methyl ester + H2O = 6-carboxyhexanoyl-[ACP] + methanol + H(+). It functions in the pathway cofactor biosynthesis; biotin biosynthesis. Functionally, the physiological role of BioH is to remove the methyl group introduced by BioC when the pimeloyl moiety is complete. It allows to synthesize pimeloyl-ACP via the fatty acid synthetic pathway through the hydrolysis of the ester bonds of pimeloyl-ACP esters. The chain is Pimeloyl-[acyl-carrier protein] methyl ester esterase from Xylella fastidiosa (strain 9a5c).